Reading from the N-terminus, the 303-residue chain is N-acetyl-D-glucosamine kinase (303 aa).

ATP-binding positions include 4–11 (GFDIGGTK) and 133–140 (GVGGGLVL). Residues His157, Cys177, Cys179, and Cys184 each contribute to the Zn(2+) site.

Belongs to the ROK (NagC/XylR) family. NagK subfamily.

It carries out the reaction N-acetyl-D-glucosamine + ATP = N-acetyl-D-glucosamine 6-phosphate + ADP + H(+). Its pathway is cell wall biogenesis; peptidoglycan recycling. Functionally, catalyzes the phosphorylation of N-acetyl-D-glucosamine (GlcNAc) derived from cell-wall degradation, yielding GlcNAc-6-P. In Salmonella heidelberg (strain SL476), this protein is N-acetyl-D-glucosamine kinase.